The sequence spans 474 residues: Glutamate--tRNA ligase (474 aa).

Positions 11–21 (PSPTGFLHIGG) match the 'HIGH' region motif. The 'KMSKS' region motif lies at 240–244 (KLSKR). Lysine 243 provides a ligand contact to ATP.

The protein belongs to the class-I aminoacyl-tRNA synthetase family. Glutamate--tRNA ligase type 1 subfamily. As to quaternary structure, monomer.

The protein localises to the cytoplasm. It catalyses the reaction tRNA(Glu) + L-glutamate + ATP = L-glutamyl-tRNA(Glu) + AMP + diphosphate. Its function is as follows. Catalyzes the attachment of glutamate to tRNA(Glu) in a two-step reaction: glutamate is first activated by ATP to form Glu-AMP and then transferred to the acceptor end of tRNA(Glu). In Nitrobacter hamburgensis (strain DSM 10229 / NCIMB 13809 / X14), this protein is Glutamate--tRNA ligase.